The chain runs to 781 residues: Cytosolic phospholipase A2 beta (781 aa).

Residues 1–112 form the C2 domain; sequence MAVAEVSRTC…RAGEFRRESF (112 aa). Ca(2+)-binding residues include Asp26, Asp32, Asp82, Asp84, and Asp90. The PLA2c domain occupies 246-781; sequence EAGLRELAVR…VQRRRQRRPH (536 aa). Ser335 acts as the Nucleophile in catalysis. Asp615 (proton acceptor) is an active-site residue.

It depends on Ca(2+) as a cofactor. As to expression, widely expressed. Expressed at higher level in brain, heart, liver, cerebellum and pancreas.

Its subcellular location is the cytoplasm. It localises to the cytosol. The protein resides in the mitochondrion membrane. The protein localises to the early endosome membrane. The enzyme catalyses a 1,2-diacyl-sn-glycero-3-phosphocholine + H2O = a 1-acyl-sn-glycero-3-phosphocholine + a fatty acid + H(+). It carries out the reaction a 1-acyl-sn-glycero-3-phosphocholine + H2O = sn-glycerol 3-phosphocholine + a fatty acid + H(+). It catalyses the reaction 1-hexadecanoyl-2-(9Z,12Z-octadecadienoyl)-sn-glycero-3-phosphoethanolamine + H2O = 1-hexadecanoyl-sn-glycero-3-phosphoethanolamine + (9Z,12Z)-octadecadienoate + H(+). The catalysed reaction is 1-hexadecanoyl-2-(5Z,8Z,11Z,14Z-eicosatetraenoyl)-sn-glycero-3-phosphoethanolamine + H2O = 1-hexadecanoyl-sn-glycero-3-phosphoethanolamine + (5Z,8Z,11Z,14Z)-eicosatetraenoate + H(+). The enzyme catalyses 1-hexadecanoyl-sn-glycero-3-phosphocholine + H2O = sn-glycerol 3-phosphocholine + hexadecanoate + H(+). It carries out the reaction 1-hexadecanoyl-2-(5Z,8Z,11Z,14Z-eicosatetraenoyl)-sn-glycero-3-phosphocholine + H2O = 1-hexadecanoyl-sn-glycero-3-phosphocholine + (5Z,8Z,11Z,14Z)-eicosatetraenoate + H(+). It catalyses the reaction 1-hexadecanoyl-2-(5Z,8Z,11Z,14Z-eicosatetraenoyl)-sn-glycero-3-phosphocholine + H2O = 2-(5Z,8Z,11Z,14Z)-eicosatetraenoyl-sn-glycero-3-phosphocholine + hexadecanoate + H(+). Stimulated by cytosolic Ca(2+). In terms of biological role, calcium-dependent phospholipase A1 and A2 and lysophospholipase that may play a role in membrane phospholipid remodeling. Calcium-dependent phospholipase A2 and lysophospholipase. Cleaves the ester bond of the fatty acyl group attached to the sn-2 position of phosphatidylethanolamines, producing lysophospholipids that may be used in deacylation-reacylation cycles. Hydrolyzes lysophosphatidylcholines with low efficiency but is inefficient toward phosphatidylcholines. Functionally, calcium-dependent phospholipase A1 and A2 and lysophospholipase. Cleaves the ester bond of the fatty acyl group attached to the sn-1 or sn-2 position of diacyl phospholipids (phospholipase A1 and A2 activity, respectively), producing lysophospholipids that may be used in deacylation-reacylation cycles. Can further hydrolyze lysophospholipids enabling complete deacylation. Has no activity toward alkylacyl phospholipids. In Homo sapiens (Human), this protein is Cytosolic phospholipase A2 beta (PLA2G4B).